The following is a 139-amino-acid chain: D-ribose pyranase (139 aa).

Catalysis depends on His20, which acts as the Proton donor. Substrate is bound by residues Asp28, His106, and 128-130 (YAN).

It belongs to the RbsD / FucU family. RbsD subfamily. In terms of assembly, homodecamer.

The protein localises to the cytoplasm. The enzyme catalyses beta-D-ribopyranose = beta-D-ribofuranose. The protein operates within carbohydrate metabolism; D-ribose degradation; D-ribose 5-phosphate from beta-D-ribopyranose: step 1/2. Its function is as follows. Catalyzes the interconversion of beta-pyran and beta-furan forms of D-ribose. This Serratia proteamaculans (strain 568) protein is D-ribose pyranase.